The primary structure comprises 925 residues: Translation initiation factor IF-2 (925 aa).

2 disordered regions span residues 52-84 (GGGK…VKAP) and 98-326 (AGGN…GVRL). Residues 57–68 (AEGAAKAPAKAA) show a composition bias toward low complexity. A compositionally biased stretch (basic and acidic residues) spans 69 to 84 (AKGDAKTAAKGDVKAP). A compositionally biased stretch (low complexity) spans 98–138 (AGGNGEAAAPPAQPGGTATTPAAQATPEAPARPGPAAARPS). Pro residues-rich tracts occupy residues 139-169 (APAP…PAPK) and 193-207 (PRPV…PGAP). The span at 236–296 (RPGGGRPGGP…GAAGAFGRPG (61 aa)) shows a compositional bias: gly residues. The segment covering 300 to 309 (RRGRKSKRQK) has biased composition (basic residues). The region spanning 421-592 (TRPPVVTVMG…AVLLTADAAL (172 aa)) is the tr-type G domain. Positions 430-437 (GHVDHGKT) are G1. Residue 430–437 (GHVDHGKT) participates in GTP binding. Residues 455–459 (GITQH) form a G2 region. Positions 480–483 (DTPG) are G3. Residues 480–484 (DTPGH) and 534–537 (NKID) each bind GTP. The G4 stretch occupies residues 534 to 537 (NKID). A G5 region spans residues 570 to 572 (SAK).

The protein belongs to the TRAFAC class translation factor GTPase superfamily. Classic translation factor GTPase family. IF-2 subfamily.

It is found in the cytoplasm. In terms of biological role, one of the essential components for the initiation of protein synthesis. Protects formylmethionyl-tRNA from spontaneous hydrolysis and promotes its binding to the 30S ribosomal subunits. Also involved in the hydrolysis of GTP during the formation of the 70S ribosomal complex. The sequence is that of Translation initiation factor IF-2 from Mycolicibacterium paratuberculosis (strain ATCC BAA-968 / K-10) (Mycobacterium paratuberculosis).